Reading from the N-terminus, the 186-residue chain is Large ribosomal subunit protein uL5 (186 aa).

Belongs to the universal ribosomal protein uL5 family. Part of the 50S ribosomal subunit; part of the 5S rRNA/L5/L18/L25 subcomplex. Contacts the 5S rRNA and the P site tRNA. Forms a bridge to the 30S subunit in the 70S ribosome.

This is one of the proteins that bind and probably mediate the attachment of the 5S RNA into the large ribosomal subunit, where it forms part of the central protuberance. In the 70S ribosome it contacts protein S13 of the 30S subunit (bridge B1b), connecting the 2 subunits; this bridge is implicated in subunit movement. Contacts the P site tRNA; the 5S rRNA and some of its associated proteins might help stabilize positioning of ribosome-bound tRNAs. The chain is Large ribosomal subunit protein uL5 from Mycoplasmopsis synoviae (strain 53) (Mycoplasma synoviae).